Consider the following 375-residue polypeptide: Mitochondrial phosphate carrier protein 3, mitochondrial (375 aa).

The helical transmembrane segment at 76-96 (AFYAACTFGGILSCGLTHMTV) threads the bilayer. Solcar repeat units lie at residues 76 to 160 (AFYA…FKKT), 173 to 257 (YKTL…IVEM), and 274 to 353 (LQLG…FKVF). Over 97 to 134 (TPLDLVKCNMQIDPAKYKSISSGFGILLKEQGVKGFFR) the chain is Mitochondrial matrix. A helical membrane pass occupies residues 135 to 154 (GWVPTLLGYSAQGACKFGFY). Residues 155–175 (EYFKKTYSDLAGPEYTAKYKT) lie on the Mitochondrial intermembrane side of the membrane. Residues 176–196 (LIYLAGSASAEIIADIALCPF) traverse the membrane as a helical segment. Residues 197–231 (EAVKVRVQTQPGFARGMSDGFPKFIKSEGYGGLYK) lie on the Mitochondrial matrix side of the membrane. Residues 232-251 (GLAPLWGRQIPYTMMKFASF) traverse the membrane as a helical segment. The Mitochondrial intermembrane segment spans residues 252–272 (ETIVEMIYKYAIPNPKSECSK). A helical membrane pass occupies residues 273–293 (GLQLGVSFAGGYVAGVFCAIV). The Mitochondrial matrix portion of the chain corresponds to 294–332 (SHPADNLVSFLNNAKGATVGDAVKKIGMVGLFTRGLPLR). A helical transmembrane segment spans residues 333–353 (IVMIGTLTGAQWGLYDAFKVF). The Mitochondrial intermembrane segment spans residues 354-375 (VGLPTTGGVAPAPAIAATEAKA).

The protein belongs to the mitochondrial carrier (TC 2.A.29) family. As to expression, expressed in stems, leaves and flowers. Strong expression in vascular tissues.

The protein resides in the mitochondrion inner membrane. Transport of phosphate groups from the cytosol to the mitochondrial matrix. Mediates salt stress tolerance through an ATP-dependent pathway and via modulation of the gibberellin metabolism. The polypeptide is Mitochondrial phosphate carrier protein 3, mitochondrial (MPT3) (Arabidopsis thaliana (Mouse-ear cress)).